The chain runs to 119 residues: Ribonuclease pancreatic (119 aa).

Q1 bears the Pyrrolidone carboxylic acid mark. The Proton acceptor role is filled by H10. Intrachain disulfides connect C25–C80, C39–C91, and C57–C106. Residue 40-44 coordinates substrate; that stretch reads KTRNT. H113 (proton donor) is an active-site residue.

The protein belongs to the pancreatic ribonuclease family. Monomer. Interacts with and forms tight 1:1 complexes with RNH1. Dimerization of two such complexes may occur. Interaction with RNH1 inhibits this protein. In terms of tissue distribution, pancreas.

The protein resides in the secreted. The enzyme catalyses an [RNA] containing cytidine + H2O = an [RNA]-3'-cytidine-3'-phosphate + a 5'-hydroxy-ribonucleotide-3'-[RNA].. The catalysed reaction is an [RNA] containing uridine + H2O = an [RNA]-3'-uridine-3'-phosphate + a 5'-hydroxy-ribonucleotide-3'-[RNA].. Functionally, endonuclease that catalyzes the cleavage of RNA on the 3' side of pyrimidine nucleotides. Acts on single-stranded and double-stranded RNA. This chain is Ribonuclease pancreatic, found in Iguana iguana (Common iguana).